Consider the following 212-residue polypeptide: Adenylate kinase (212 aa).

Glycine 10–threonine 15 serves as a coordination point for ATP. The NMP stretch occupies residues serine 30–valine 59. Residues threonine 31, arginine 36, glutamate 57–valine 59, glycine 86–arginine 89, and glutamine 93 contribute to the AMP site. The LID stretch occupies residues glycine 127–aspartate 159. Residues arginine 128 and threonine 137 to phenylalanine 138 each bind ATP. Residues arginine 156 and arginine 167 each contribute to the AMP site. Glutamine 195 is a binding site for ATP.

This sequence belongs to the adenylate kinase family. In terms of assembly, monomer.

The protein localises to the cytoplasm. It catalyses the reaction AMP + ATP = 2 ADP. It participates in purine metabolism; AMP biosynthesis via salvage pathway; AMP from ADP: step 1/1. Functionally, catalyzes the reversible transfer of the terminal phosphate group between ATP and AMP. Plays an important role in cellular energy homeostasis and in adenine nucleotide metabolism. The sequence is that of Adenylate kinase from Streptococcus gordonii (strain Challis / ATCC 35105 / BCRC 15272 / CH1 / DL1 / V288).